Consider the following 269-residue polypeptide: Cytolethal distending toxin subunit B homolog (269 aa).

A signal peptide spans 1-22 (MKKPVFFLLTMIICSYISFACA).

It localises to the secreted. Produces a CDT (cytolethal distending toxin) activity, which causes DNA damage in intoxicated cells. This damage induces G2/M cell cycle arrest, chromatin fragmentation, cell distention and nucleus enlargement. This is Cytolethal distending toxin subunit B homolog (cdtB) from Salmonella typhi.